The following is a 266-amino-acid chain: Signal peptidase I (266 aa).

Residues 1 to 20 lie on the Cytoplasmic side of the membrane; that stretch reads MQTDNTKSNTNKTAKQEWGS. A helical transmembrane segment spans residues 21 to 41; sequence FAFVICIALLIRILIMEPFNV. Residues 42-266 lie on the Extracellular side of the membrane; it reads PTGSMKATIL…IFRNLYNTDA (225 aa). Active-site residues include Ser45 and Lys108.

This sequence belongs to the peptidase S26 family.

The protein localises to the cell membrane. It catalyses the reaction Cleavage of hydrophobic, N-terminal signal or leader sequences from secreted and periplasmic proteins.. This Rickettsia conorii (strain ATCC VR-613 / Malish 7) protein is Signal peptidase I (lepB).